The primary structure comprises 189 residues: Anthranilate synthase component 2 (189 aa).

The Glutamine amidotransferase type-1 domain maps to 1-189; sequence MILIIDNYDS…QLLRNFLEYS (189 aa). An L-glutamine-binding site is contributed by 52 to 54; the sequence is GPG. Cysteine 79 (nucleophile; for GATase activity) is an active-site residue. L-glutamine contacts are provided by residues glutamine 83 and 129-130; that span reads SL. Residues histidine 169 and glutamate 171 contribute to the active site.

In terms of assembly, tetramer of two components I and two components II.

It is found in the plastid. The protein localises to the chloroplast. The catalysed reaction is chorismate + L-glutamine = anthranilate + pyruvate + L-glutamate + H(+). Its pathway is amino-acid biosynthesis; L-tryptophan biosynthesis; L-tryptophan from chorismate: step 1/5. This Pyropia yezoensis (Susabi-nori) protein is Anthranilate synthase component 2 (trpG).